The sequence spans 131 residues: Prefoldin subunit beta (131 aa).

2 disordered regions span residues 19–41 (LQET…RESE) and 112–131 (LQGG…AGGA). Positions 20 to 35 (QETAQQVAQQKQQAET) are enriched in low complexity. Residues 114–131 (GGAGGGPMGPGGPGAGGA) are compositionally biased toward gly residues.

The protein belongs to the prefoldin subunit beta family. In terms of assembly, heterohexamer of two alpha and four beta subunits.

It is found in the cytoplasm. Functionally, molecular chaperone capable of stabilizing a range of proteins. Seems to fulfill an ATP-independent, HSP70-like function in archaeal de novo protein folding. The sequence is that of Prefoldin subunit beta from Natronomonas pharaonis (strain ATCC 35678 / DSM 2160 / CIP 103997 / JCM 8858 / NBRC 14720 / NCIMB 2260 / Gabara) (Halobacterium pharaonis).